Consider the following 717-residue polypeptide: MTGPDIDDFENALNAFWHGRPPASLEDVMALYGVLAVAESGGELYGTDSKLEPFVDDGRLVTIDIDLTGETPNVSDPKVDTLRVEDVSKLRYAHKSSGRGAKYSLTQIGSKNGNDAEGVASTILGRVRSWTTQDSVRSVTGEDGHPDGWIVEELAAVFEKGSDTLEALEEAIKALLPPDESLPTVITVRLRLDAGRLSHGEESGPRWFWPAELDVLEEAMKRYATANAADKNVESGDGISEGESVGLVTDRVERVVGTPDNPIGVFSVKHPDAQPGLRQDQSWRNYPVGADTAMLFSKGQDLVETCVLRRGGVETYALPYFAGELTPLKAQSLYGAIQSLDRESDYDDSGGSPLARVTYELRESDDETLQELAKTELRFYTITLPIGDDKNVIAEEPAAPVYWVSELADALAQTVHGPTLNPERGGFAPYDNWSLLELATEDFEESRKFGFYRIVGHQFTDSAFAYRGDDEDDDFRRVVDHRLIAGVPLDASMLFDEYLRRYHDESEGGDLPPHQIVAQQLVHLETLSRAGLLNGLDVPIEPPTMTTETETETDFDTTSLPAIREHRLESFLDRPLFEAPARRAAALAGVLVGQVSWHQESERNVGRPLDAQTKGDQLTKNSLENALTSALEKAKVYALDSEYRSDRDMLFPETVDRLLETTEDMPSAWPIEKRELQFCYVLGHAHGRRSMPVAFDLHEKEDEDDQDTEEPAESTTN.

Disordered stretches follow at residues 263–283 (IGVFSVKHPDAQPGLRQDQSW) and 698–717 (HEKEDEDDQDTEEPAESTTN). A compositionally biased stretch (acidic residues) spans 701–717 (EDEDDQDTEEPAESTTN).

The protein localises to the cytoplasm. Functionally, CRISPR (clustered regularly interspaced short palindromic repeat) is an adaptive immune system that provides protection against mobile genetic elements (viruses, transposable elements and conjugative plasmids). CRISPR clusters contain sequences complementary to antecedent mobile elements and target invading nucleic acids. CRISPR clusters are transcribed and processed into CRISPR RNA (crRNA). Plasmid targeted by CRISPR locus P1 transform wild-type cells very poorly. This subunit might be involved in stabilizing crRNA. The sequence is that of CRISPR-associated protein Cas8b from Haloferax volcanii (strain ATCC 29605 / DSM 3757 / JCM 8879 / NBRC 14742 / NCIMB 2012 / VKM B-1768 / DS2) (Halobacterium volcanii).